Here is a 37-residue protein sequence, read N- to C-terminus: Large ribosomal subunit protein bL36c (37 aa).

This sequence belongs to the bacterial ribosomal protein bL36 family.

Its subcellular location is the plastid. It localises to the chloroplast. This is Large ribosomal subunit protein bL36c from Welwitschia mirabilis (Tree tumbo).